The sequence spans 215 residues: Calmodulin-like protein 5 (215 aa).

The segment at 38-61 (KNSPPSPSTMLPSPSSSSAPTKRI) is disordered. A compositionally biased stretch (low complexity) spans 45–57 (STMLPSPSSSSAP). 4 consecutive EF-hand domains span residues 61–96 (IDPSELKRVFQMFDKNGDGRITKEELNDSLENLGIY), 97–132 (IPDKDLTQMIHKIDANGDGCVDIDEFESLYSSIVDE), 139–174 (TEEEDMKDAFNVFDQDGDGFITVEELKSVMASLGLK), and 177–212 (KTLDGCKKMIMQVDADGDGRVNYKEFLQMMKGGGFS). Ca(2+) contacts are provided by aspartate 74, asparagine 76, aspartate 78, arginine 80, glutamate 85, aspartate 110, asparagine 112, aspartate 114, cysteine 116, glutamate 121, aspartate 152, aspartate 154, aspartate 156, glutamate 163, aspartate 190, aspartate 192, aspartate 194, arginine 196, and glutamate 201.

This sequence belongs to the calmodulin family.

Functionally, potential calcium sensor. The chain is Calmodulin-like protein 5 (CML5) from Arabidopsis thaliana (Mouse-ear cress).